The following is a 430-amino-acid chain: Small ribosomal subunit protein uS5m (430 aa).

Positions 108-128 (AGARKGRGKRTKRKRRKDLNR) are disordered. Residues 111-125 (RKGRGKRTKRKRRKD) are compositionally biased toward basic residues. One can recognise an S5 DRBM domain in the interval 218–282 (FDTRILEVRN…NRAVHYLHYI (65 aa)).

The protein belongs to the universal ribosomal protein uS5 family. As to quaternary structure, component of the mitochondrial ribosome small subunit (28S) which comprises a 12S rRNA and about 30 distinct proteins.

The protein resides in the mitochondrion. The chain is Small ribosomal subunit protein uS5m (MRPS5) from Bos taurus (Bovine).